The sequence spans 358 residues: Fructose-bisphosphate aldolase class 2 (358 aa).

Ser-61 is a D-glyceraldehyde 3-phosphate binding site. The active-site Proton donor is the Asp-109. His-110, Asp-144, Glu-174, and His-226 together coordinate Zn(2+). Gly-227 is a binding site for dihydroxyacetone phosphate. His-264 serves as a coordination point for Zn(2+). Dihydroxyacetone phosphate-binding positions include 265 to 267 and 286 to 289; these read GGS and NIDT.

Belongs to the class II fructose-bisphosphate aldolase family. Zn(2+) serves as cofactor.

It carries out the reaction beta-D-fructose 1,6-bisphosphate = D-glyceraldehyde 3-phosphate + dihydroxyacetone phosphate. It participates in carbohydrate degradation; glycolysis; D-glyceraldehyde 3-phosphate and glycerone phosphate from D-glucose: step 4/4. In terms of biological role, catalyzes the aldol condensation of dihydroxyacetone phosphate (DHAP or glycerone-phosphate) with glyceraldehyde 3-phosphate (G3P) to form fructose 1,6-bisphosphate (FBP) in gluconeogenesis and the reverse reaction in glycolysis. This chain is Fructose-bisphosphate aldolase class 2 (fbaA), found in Buchnera aphidicola subsp. Acyrthosiphon pisum (strain APS) (Acyrthosiphon pisum symbiotic bacterium).